Consider the following 272-residue polypeptide: MKRTAFFISDGTGITAEALGQSLLAQFEFIEFEKITLPYIDSLEKARKAVARIDKASEIDGNKPVIFDTIVNSEIRAEIRKSQGYMIDIFGTFLEPLEQELGSKSTYTVGKSHSIVSNSSYNRRIDAMNYALENDDGARVRYYNEADIILVGVSRSGKTPTCIYLALQYGIKAANFPLTEDDILDQRLPESLRSYREKIFGLTIDPERLAVIRNERKPNSKYASIKQCNYEVEEVELMYRRERIPYLNSTDYSVEEISTRIMMMTGIERHIR.

Residue glycine 152 to threonine 159 coordinates ADP.

Belongs to the pyruvate, phosphate/water dikinase regulatory protein family. PSRP subfamily.

The enzyme catalyses [pyruvate, water dikinase] + ADP = [pyruvate, water dikinase]-phosphate + AMP + H(+). It carries out the reaction [pyruvate, water dikinase]-phosphate + phosphate + H(+) = [pyruvate, water dikinase] + diphosphate. In terms of biological role, bifunctional serine/threonine kinase and phosphorylase involved in the regulation of the phosphoenolpyruvate synthase (PEPS) by catalyzing its phosphorylation/dephosphorylation. This chain is Putative phosphoenolpyruvate synthase regulatory protein, found in Hahella chejuensis (strain KCTC 2396).